Here is a 295-residue protein sequence, read N- to C-terminus: Shikimate dehydrogenase (NADP(+)) (295 aa).

Shikimate contacts are provided by residues Ser20 to Ser22 and Thr68. Catalysis depends on Lys72, which acts as the Proton acceptor. 2 residues coordinate shikimate: Asn93 and Asp108. NADP(+)-binding positions include Gly132–Ala136 and Met234. Tyr236 serves as a coordination point for shikimate. Gly257 provides a ligand contact to NADP(+).

This sequence belongs to the shikimate dehydrogenase family. Homodimer.

It catalyses the reaction shikimate + NADP(+) = 3-dehydroshikimate + NADPH + H(+). It participates in metabolic intermediate biosynthesis; chorismate biosynthesis; chorismate from D-erythrose 4-phosphate and phosphoenolpyruvate: step 4/7. Functionally, involved in the biosynthesis of the chorismate, which leads to the biosynthesis of aromatic amino acids. Catalyzes the reversible NADPH linked reduction of 3-dehydroshikimate (DHSA) to yield shikimate (SA). The protein is Shikimate dehydrogenase (NADP(+)) of Chlorobaculum tepidum (strain ATCC 49652 / DSM 12025 / NBRC 103806 / TLS) (Chlorobium tepidum).